A 447-amino-acid polypeptide reads, in one-letter code: ATP-dependent 6-phosphofructokinase (447 aa).

Residues Gly-88, 154–155, and 179–182 contribute to the ATP site; these read RG and GDGT. A Mg(2+)-binding site is contributed by Asp-180. Residues 208–210, 253–255, Glu-315, and 368–371 contribute to the substrate site; these read TVD, MGR, and YIIR. Residue Asp-210 is the Proton acceptor of the active site.

This sequence belongs to the phosphofructokinase type A (PFKA) family. PPi-dependent PFK group II subfamily. Atypical ATP-dependent clade 'X' sub-subfamily. As to quaternary structure, homodimer. Requires Mg(2+) as cofactor.

It is found in the cytoplasm. It carries out the reaction beta-D-fructose 6-phosphate + ATP = beta-D-fructose 1,6-bisphosphate + ADP + H(+). It participates in carbohydrate degradation; glycolysis; D-glyceraldehyde 3-phosphate and glycerone phosphate from D-glucose: step 3/4. In terms of biological role, catalyzes the phosphorylation of D-fructose 6-phosphate to fructose 1,6-bisphosphate by ATP, the first committing step of glycolysis. In Borreliella burgdorferi (strain ATCC 35210 / DSM 4680 / CIP 102532 / B31) (Borrelia burgdorferi), this protein is ATP-dependent 6-phosphofructokinase.